Consider the following 458-residue polypeptide: Argininosuccinate lyase (458 aa).

It belongs to the lyase 1 family. Argininosuccinate lyase subfamily.

It localises to the cytoplasm. It catalyses the reaction 2-(N(omega)-L-arginino)succinate = fumarate + L-arginine. The protein operates within amino-acid biosynthesis; L-arginine biosynthesis; L-arginine from L-ornithine and carbamoyl phosphate: step 3/3. The sequence is that of Argininosuccinate lyase from Bacillus velezensis (strain DSM 23117 / BGSC 10A6 / LMG 26770 / FZB42) (Bacillus amyloliquefaciens subsp. plantarum).